The chain runs to 243 residues: MALVKEVLVVLNRLSPFELQESWDNSGLNVGSENSEFSEIVACLEITLKIALNAPQNALIITHHPLIFKPLKTLNDEIYPGNILKILIQKNVSVISMHTNFDKTHLNKHFAHALLEFDGLVEKGLMLVKENANIEFDALVKKIKSSLGVGSLACVKSSQTIKDLAFVCGSGASMFSSLKAQSCLITGDVKYHDAMIAQSLGISLIDATHYYSERGFALIVAEILHSFNYLVTIENFKNPLQII.

Positions 63, 64, 102, 209, and 213 each coordinate a divalent metal cation.

Belongs to the GTP cyclohydrolase I type 2/NIF3 family. Homohexamer.

The enzyme catalyses GTP + H2O = 7,8-dihydroneopterin 3'-triphosphate + formate + H(+). The protein operates within cofactor biosynthesis; 7,8-dihydroneopterin triphosphate biosynthesis; 7,8-dihydroneopterin triphosphate from GTP: step 1/1. Functionally, converts GTP to dihydroneopterin triphosphate. Is not active with GDP, GMP, ATP, CTP or UTP as substrate. This chain is GTP cyclohydrolase 1 type 2, found in Helicobacter pylori (strain ATCC 700392 / 26695) (Campylobacter pylori).